A 313-amino-acid chain; its full sequence is Probable cell division protein WhiA (313 aa).

The segment at residues 277–311 (SLKEVAAQVPDGPISKSGVNHRFQKIREMAQQLKE) is a DNA-binding region (H-T-H motif).

The protein belongs to the WhiA family.

In terms of biological role, involved in cell division and chromosome segregation. This chain is Probable cell division protein WhiA, found in Lactobacillus gasseri (strain ATCC 33323 / DSM 20243 / BCRC 14619 / CIP 102991 / JCM 1131 / KCTC 3163 / NCIMB 11718 / NCTC 13722 / AM63).